The following is a 543-amino-acid chain: Zinc finger CCHC domain-containing protein 7 (543 aa).

Residues 51-71 (EEEHEEKNSGNSESSSSKPNQ) are disordered. Low complexity predominate over residues 59–68 (SGNSESSSSK). Residues lysine 131, lysine 139, lysine 141, lysine 239, and lysine 254 each participate in a glycyl lysine isopeptide (Lys-Gly) (interchain with G-Cter in SUMO2) cross-link. CCHC-type zinc fingers lie at residues 241 to 258 (IICR…NCPL), 263 to 280 (RRCF…SCPA), and 304 to 321 (KQCD…ACTE). A Glycyl lysine isopeptide (Lys-Gly) (interchain with G-Cter in SUMO2) cross-link involves residue lysine 339. Residues 348-365 (AYCYHCAQKGHYGHECPE) form a CCHC-type 4 zinc finger. Residues lysine 412, lysine 417, and lysine 435 each participate in a glycyl lysine isopeptide (Lys-Gly) (interchain with G-Cter in SUMO2) cross-link. Residues 414–543 (PYIKAANENP…FLIKQRKKKS (130 aa)) form a disordered region. 2 stretches are compositionally biased toward basic and acidic residues: residues 441–457 (QENK…NRNW) and 465–475 (RHREVDEDFPR). Lysine 478 participates in a covalent cross-link: Glycyl lysine isopeptide (Lys-Gly) (interchain with G-Cter in SUMO2). A compositionally biased stretch (polar residues) spans 479-491 (TYSSPGSFKTQKP). Residues serine 482 and serine 485 each carry the phosphoserine modification. Residues lysine 487, lysine 490, and lysine 493 each participate in a glycyl lysine isopeptide (Lys-Gly) (interchain with G-Cter in SUMO2) cross-link. Residues 493 to 502 (KPFHRSSHYH) show a composition bias toward basic residues. Residues 503–515 (TSREDKSPKEGKR) are compositionally biased toward basic and acidic residues. A Glycyl lysine isopeptide (Lys-Gly) (interchain with G-Cter in SUMO2) cross-link involves residue lysine 537.

As to quaternary structure, component of a nucleolar TRAMP-like complex, an ATP-dependent exosome regulatory complex consisting of a helicase (MTREX), an oligadenylate polymerase (TENT4B or TENT4A), and a substrate specific RNA-binding factor (ZCCHC7 or ZCCHC8). Several TRAMP-like complexes exist with specific compositions and are associated with nuclear, or nucleolar RNA exosomes.

It localises to the nucleus. The protein localises to the nucleolus. This Homo sapiens (Human) protein is Zinc finger CCHC domain-containing protein 7 (ZCCHC7).